We begin with the raw amino-acid sequence, 237 residues long: Uridylate kinase (237 aa).

An ATP-binding site is contributed by 12 to 15; that stretch reads KLSG. Gly-53 provides a ligand contact to UMP. Positions 54 and 58 each coordinate ATP. UMP is bound by residues Asp-73 and 134-141; that span reads TGNPYFTT. ATP-binding residues include Thr-161, Tyr-167, and Asp-170.

Belongs to the UMP kinase family. As to quaternary structure, homohexamer.

The protein localises to the cytoplasm. The catalysed reaction is UMP + ATP = UDP + ADP. Its pathway is pyrimidine metabolism; CTP biosynthesis via de novo pathway; UDP from UMP (UMPK route): step 1/1. Inhibited by UTP. Functionally, catalyzes the reversible phosphorylation of UMP to UDP. This is Uridylate kinase from Rhizorhabdus wittichii (strain DSM 6014 / CCUG 31198 / JCM 15750 / NBRC 105917 / EY 4224 / RW1) (Sphingomonas wittichii).